The sequence spans 95 residues: Glutamine synthetase and cystathionine beta-lyase binding protein (95 aa).

In terms of assembly, interacts with glutamine synthetase (TTHA1329) and cystathionine beta-lyase (TTHA1620), but proteins do not form a ternary complex.

Binds to glutamine synthetase and cystathionine beta-lyase. May be utilized for the efficient use of nitrogen in the global nitrogen regulation of T.thermophilus. The protein is Glutamine synthetase and cystathionine beta-lyase binding protein of Thermus thermophilus (strain ATCC 27634 / DSM 579 / HB8).